The sequence spans 512 residues: ATP synthase subunit alpha 2 (512 aa).

169–176 (GDRQTGKT) is an ATP binding site.

It belongs to the ATPase alpha/beta chains family. As to quaternary structure, F-type ATPases have 2 components, CF(1) - the catalytic core - and CF(0) - the membrane proton channel. CF(1) has five subunits: alpha(3), beta(3), gamma(1), delta(1), epsilon(1). CF(0) has three main subunits: a(1), b(2) and c(9-12). The alpha and beta chains form an alternating ring which encloses part of the gamma chain. CF(1) is attached to CF(0) by a central stalk formed by the gamma and epsilon chains, while a peripheral stalk is formed by the delta and b chains.

It is found in the cell inner membrane. The enzyme catalyses ATP + H2O + 4 H(+)(in) = ADP + phosphate + 5 H(+)(out). Produces ATP from ADP in the presence of a proton gradient across the membrane. The alpha chain is a regulatory subunit. The polypeptide is ATP synthase subunit alpha 2 (Vibrio campbellii (strain ATCC BAA-1116)).